The following is an 81-amino-acid chain: Large ribosomal subunit protein bL31B (81 aa).

The protein belongs to the bacterial ribosomal protein bL31 family. Type B subfamily. Part of the 50S ribosomal subunit.

The polypeptide is Large ribosomal subunit protein bL31B (Limosilactobacillus reuteri (strain DSM 20016) (Lactobacillus reuteri)).